The following is a 307-amino-acid chain: Sesquiterpene synthase-like protein Agr10 (307 aa).

A disordered region spans residues 287 to 307 (GRYFGDRGPENQSDIPTSSNR). The segment covering 296 to 307 (ENQSDIPTSSNR) has biased composition (polar residues).

This sequence belongs to the terpene synthase family.

The chain is Sesquiterpene synthase-like protein Agr10 from Cyclocybe aegerita (Black poplar mushroom).